The primary structure comprises 46 residues: Protein PsbN (46 aa).

Residues 10 to 30 traverse the membrane as a helical segment; the sequence is VAIAVLAALLGLTGFGVYTAF.

The protein belongs to the PsbN family.

The protein localises to the cellular thylakoid membrane. In terms of biological role, may play a role in photosystem I and II biogenesis. The chain is Protein PsbN from Synechococcus sp. (strain CC9311).